The chain runs to 321 residues: uncharacterized protein (321 aa).

The Proton donor role is filled by tyrosine 49. Histidine 106 serves as a coordination point for substrate.

This sequence belongs to the aldo/keto reductase family.

This is an uncharacterized protein from Caenorhabditis elegans.